Here is a 758-residue protein sequence, read N- to C-terminus: 5-methyltetrahydropteroyltriglutamate--homocysteine methyltransferase (758 aa).

Residues 16–19 and Lys-112 contribute to the 5-methyltetrahydropteroyltri-L-glutamate site; that span reads RELK. Residues 433–435 and Glu-486 contribute to the L-homocysteine site; that span reads IGS. Residues 433–435 and Glu-486 contribute to the L-methionine site; that span reads IGS. 5-methyltetrahydropteroyltri-L-glutamate contacts are provided by residues 517-518 and Trp-563; that span reads RC. Asp-601 serves as a coordination point for L-homocysteine. Asp-601 contributes to the L-methionine binding site. Residue Glu-607 coordinates 5-methyltetrahydropteroyltri-L-glutamate. Zn(2+)-binding residues include His-643, Cys-645, and Glu-667. The Proton donor role is filled by His-696. Cys-728 serves as a coordination point for Zn(2+).

It belongs to the vitamin-B12 independent methionine synthase family. Requires Zn(2+) as cofactor.

It catalyses the reaction 5-methyltetrahydropteroyltri-L-glutamate + L-homocysteine = tetrahydropteroyltri-L-glutamate + L-methionine. Its pathway is amino-acid biosynthesis; L-methionine biosynthesis via de novo pathway; L-methionine from L-homocysteine (MetE route): step 1/1. In terms of biological role, catalyzes the transfer of a methyl group from 5-methyltetrahydrofolate to homocysteine resulting in methionine formation. This Neisseria meningitidis serogroup C / serotype 2a (strain ATCC 700532 / DSM 15464 / FAM18) protein is 5-methyltetrahydropteroyltriglutamate--homocysteine methyltransferase.